Reading from the N-terminus, the 259-residue chain is Peroxisomal membrane protein 11B (259 aa).

An N6-acetyllysine modification is found at lysine 43. The tract at residues valine 211 to proline 259 is interaction with PEX19, PEX11G and FIS1 and peroxisome targeting. The chain crosses the membrane as a helical span at residues isoleucine 234–tryptophan 254.

Belongs to the peroxin-11 family. As to quaternary structure, homodimer. Heterodimer with PEX11G. Interacts with PEX19. Interacts with FIS1.

The protein resides in the peroxisome membrane. Functionally, involved in peroxisomal proliferation. May regulate peroxisome division by recruiting the dynamin-related GTPase DNM1L to the peroxisomal membrane. Promotes membrane protrusion and elongation on the peroxisomal surface. This is Peroxisomal membrane protein 11B (PEX11B) from Pongo abelii (Sumatran orangutan).